The primary structure comprises 113 residues: Protein TrbJ (113 aa).

This chain is Protein TrbJ (trbJ), found in Escherichia coli (strain K12).